A 454-amino-acid chain; its full sequence is Putative tyrosine kinase 36 (454 aa).

ATP is bound by residues 80–88 (LGSGSFGKV) and Lys98. Asp192 serves as the catalytic Proton acceptor.

The protein belongs to the protein kinase superfamily. Tyr protein kinase family.

The enzyme catalyses L-tyrosyl-[protein] + ATP = O-phospho-L-tyrosyl-[protein] + ADP + H(+). The sequence is that of Putative tyrosine kinase 36 (36) from Alcelaphine herpesvirus 1 (strain C500) (AlHV-1).